A 273-amino-acid chain; its full sequence is Putative phosphoenolpyruvate synthase regulatory protein (273 aa).

153-160 serves as a coordination point for ADP; the sequence is GVSRSGKT.

This sequence belongs to the pyruvate, phosphate/water dikinase regulatory protein family. PSRP subfamily.

It carries out the reaction [pyruvate, water dikinase] + ADP = [pyruvate, water dikinase]-phosphate + AMP + H(+). It catalyses the reaction [pyruvate, water dikinase]-phosphate + phosphate + H(+) = [pyruvate, water dikinase] + diphosphate. In terms of biological role, bifunctional serine/threonine kinase and phosphorylase involved in the regulation of the phosphoenolpyruvate synthase (PEPS) by catalyzing its phosphorylation/dephosphorylation. The protein is Putative phosphoenolpyruvate synthase regulatory protein of Polaromonas sp. (strain JS666 / ATCC BAA-500).